Consider the following 177-residue polypeptide: Large ribosomal subunit protein uL10 (177 aa).

It belongs to the universal ribosomal protein uL10 family. As to quaternary structure, part of the ribosomal stalk of the 50S ribosomal subunit. The N-terminus interacts with L11 and the large rRNA to form the base of the stalk. The C-terminus forms an elongated spine to which L12 dimers bind in a sequential fashion forming a multimeric L10(L12)X complex.

Its function is as follows. Forms part of the ribosomal stalk, playing a central role in the interaction of the ribosome with GTP-bound translation factors. The polypeptide is Large ribosomal subunit protein uL10 (Thermoanaerobacter pseudethanolicus (strain ATCC 33223 / 39E) (Clostridium thermohydrosulfuricum)).